Reading from the N-terminus, the 247-residue chain is ATP synthase subunit a, chloroplastic (247 aa).

A run of 5 helical transmembrane segments spans residues 38 to 58 (QVLI…SIAV), 95 to 115 (VPFI…GALL), 134 to 154 (INTT…AGLT), 199 to 219 (LVVV…VMFL), and 220 to 240 (GLFT…AYIG).

Belongs to the ATPase A chain family. As to quaternary structure, F-type ATPases have 2 components, CF(1) - the catalytic core - and CF(0) - the membrane proton channel. CF(1) has five subunits: alpha(3), beta(3), gamma(1), delta(1), epsilon(1). CF(0) has four main subunits: a, b, b' and c.

It is found in the plastid. The protein resides in the chloroplast thylakoid membrane. Key component of the proton channel; it plays a direct role in the translocation of protons across the membrane. In Eucalyptus globulus subsp. globulus (Tasmanian blue gum), this protein is ATP synthase subunit a, chloroplastic.